The sequence spans 531 residues: SWI/SNF-related matrix-associated actin-dependent regulator of chromatin subfamily D member 2 (531 aa).

An asymmetric dimethylarginine mark is found at R81 and R104. Phosphoserine is present on S203. The disordered stretch occupies residues 205–226; sequence SKAEGDSAGTAGTPGGTPAGDK. T217 is subject to Phosphothreonine. Residue K226 forms a Glycyl lysine isopeptide (Lys-Gly) (interchain with G-Cter in SUMO2) linkage. Residues 306–383 form the SWIB/MDM2 domain; sequence HQPPQYKLDP…PMKLAGLLQH (78 aa).

The protein belongs to the SMARCD family. In terms of assembly, component of the multiprotein chromatin-remodeling complexes SWI/SNF: SWI/SNF-A (BAF), SWI/SNF-B (PBAF) and related complexes. The canonical complex contains a catalytic subunit (either SMARCA4/BRG1/BAF190A or SMARCA2/BRM/BAF190B), and at least SMARCE1, ACTL6A/BAF53, SMARCC1/BAF155, SMARCC2/BAF170, and SMARCB1/SNF5/BAF47. Other subunits specific to each of the complexes may also be present permitting several possible combinations developmentally and tissue specific. Component of the BAF complex, which includes at least actin (ACTB), ARID1A/BAF250A, ARID1B/BAF250B, SMARCA2/BRM, SMARCA4/BRG1, ACTL6A/BAF53, ACTL6B/BAF53B, SMARCE1/BAF57, SMARCC1/BAF155, SMARCC2/BAF170, SMARCB1/SNF5/INI1, and one or more SMARCD1/BAF60A, SMARCD2/BAF60B, or SMARCD3/BAF60C. In muscle cells, the BAF complex also contains DPF3. Component of the SWI/SNF-B (PBAF) chromatin remodeling complex, at least composed of SMARCA4/BRG1, SMARCB1/BAF47/SNF5, ACTL6A/BAF53A or ACTL6B/BAF53B, SMARCE1/BAF57, SMARCD1/BAF60A, SMARCD2/BAF60B, perhaps SMARCD3/BAF60C, SMARCC1/BAF155, SMARCC2/BAF170, PBRM1/BAF180, ARID2/BAF200 and actin (ACTB). Interacts with UNKL. Interacts with CEBPE. Ubiquitinated through a signaling process involving RAC1 and the RING finger protein UNKL. Isoform 2 is expressed in the pancreas.

It localises to the nucleus. Functionally, involved in transcriptional activation and repression of select genes by chromatin remodeling (alteration of DNA-nucleosome topology). Component of SWI/SNF chromatin remodeling complexes that carry out key enzymatic activities, changing chromatin structure by altering DNA-histone contacts within a nucleosome in an ATP-dependent manner. Critical regulator of myeloid differentiation, controlling granulocytopoiesis and the expression of genes involved in neutrophil granule formation. This is SWI/SNF-related matrix-associated actin-dependent regulator of chromatin subfamily D member 2 (SMARCD2) from Homo sapiens (Human).